The sequence spans 284 residues: ATP phosphoribosyltransferase (284 aa).

Belongs to the ATP phosphoribosyltransferase family. Long subfamily. The cofactor is Mg(2+).

The protein localises to the cytoplasm. It carries out the reaction 1-(5-phospho-beta-D-ribosyl)-ATP + diphosphate = 5-phospho-alpha-D-ribose 1-diphosphate + ATP. It functions in the pathway amino-acid biosynthesis; L-histidine biosynthesis; L-histidine from 5-phospho-alpha-D-ribose 1-diphosphate: step 1/9. Feedback inhibited by histidine. Its function is as follows. Catalyzes the condensation of ATP and 5-phosphoribose 1-diphosphate to form N'-(5'-phosphoribosyl)-ATP (PR-ATP). Has a crucial role in the pathway because the rate of histidine biosynthesis seems to be controlled primarily by regulation of HisG enzymatic activity. The chain is ATP phosphoribosyltransferase from Corynebacterium kroppenstedtii (strain DSM 44385 / JCM 11950 / CIP 105744 / CCUG 35717).